A 944-amino-acid polypeptide reads, in one-letter code: ATP-dependent RNA helicase DDX42 (944 aa).

Residues 1-18 (MNWNKGGPGTKRGFGFGG) show a composition bias toward gly residues. 3 disordered regions span residues 1 to 119 (MNWN…LEAF), 131 to 155 (MKRL…EEED), and 182 to 203 (EYDS…LPPI). Low complexity predominate over residues 35–52 (SHSAFGTAGSSAAFAKSG). Acidic residues predominate over residues 70-84 (DEENAYFEDEEEDNS). The stretch at 120-157 (MAEVEDQAARDMKRLEDKDKEKKNAKGIRDDIEEEDDQ) forms a coiled coil. A compositionally biased stretch (basic and acidic residues) spans 131-149 (MKRLEDKDKEKKNAKGIRD). A Q motif motif is present at residues 253–281 (SSFARFGFDEQLMHQIRKSEYTQPTPIQC). The 176-residue stretch at 284–459 (VPVAMSGRDM…RDILIDPIRV (176 aa)) folds into the Helicase ATP-binding domain. 297–304 (AKTGSGKT) is an ATP binding site. The DEAD box motif lies at 407–410 (DEAD). The Helicase C-terminal domain occupies 487 to 632 (WLTRRLVEFT…HVSKELLDLA (146 aa)). 3 disordered regions span residues 642 to 682 (RFKG…VMSN), 723 to 753 (GSSA…AANP), and 794 to 944 (SANA…RWDS). Residues 723–737 (GSSAAGASGWTSAGS) show a composition bias toward low complexity. Residues 738-752 (LNSVPTSSAQQNAAN) are compositionally biased toward polar residues. Over residues 794–814 (SANASAGNREGVGSAGSAPRG) the composition is skewed to low complexity. Residues 815 to 824 (GSSGGGGGGI) show a composition bias toward gly residues. Basic and acidic residues-rich tracts occupy residues 825–887 (VRER…RHFT) and 901–926 (NISE…DNKT).

This sequence belongs to the DEAD box helicase family. DDX42 subfamily. In terms of assembly, transient component of the SF3B subcomplex of the 17S U2 SnRNP complex.

It localises to the cytoplasm. It is found in the nucleus. The catalysed reaction is ATP + H2O = ADP + phosphate + H(+). ATP-dependent RNA helicase that binds to partially double-stranded RNAs (dsRNAs) in order to unwind RNA secondary structures. Unwinding is promoted in the presence of single-strand binding proteins. Also mediates RNA duplex formation thereby displacing the single-strand RNA binding protein. ATP and ADP modulate its activity: ATP binding and hydrolysis by DDX42 triggers RNA strand separation, whereas the ADP-bound form of the protein triggers annealing of complementary RNA strands. Required for assembly of the 17S U2 SnRNP complex of the spliceosome, a large ribonucleoprotein complex that removes introns from transcribed pre-mRNAs: DDX42 associates transiently with the SF3B subcomplex of the 17S U2 SnRNP complex and is released after fulfilling its role in the assembly of 17S U2 SnRNP. This chain is ATP-dependent RNA helicase DDX42 (DDX42), found in Gallus gallus (Chicken).